A 339-amino-acid polypeptide reads, in one-letter code: Erlin-2 (339 aa).

The Cytoplasmic segment spans residues 1 to 3; that stretch reads MAQ. Residues 4 to 24 form a helical membrane-spanning segment; that stretch reads LGAVVAVASSFFCASLFSAVH. Residues 25–339 are Extracellular-facing; that stretch reads KIEEGHIGVY…EPLETATKDN (315 aa). N106 carries N-linked (GlcNAc...) asparagine glycosylation. The tract at residues 177–309 is interaction with ERLIN1; sequence EAIRRNYELM…DIPNMFMDSA (133 aa). An N6-acetyllysine modification is found at K267.

Belongs to the band 7/mec-2 family. Forms a heteromeric complex with ERLIN1. In complex with ERLIN1, interacts with RNF170. Interacts with activated ITPR1, independently of the degree of ITPR1 polyubiquitination. Interacts with SCAP, INSIG1, SREBF1 and SREBF2 under cholesterol sufficiency conditions; indicative for an association with the SCAP-SREBP-INSIG complex. Probably part of an AMFR/gp78 and INSIG1-containing ubiquitin ligase complex involved in ERAD of HMGCR. Interacts with TMUB1; TMUB1 bridges the association with AMFR. Interacts with SYVN1 and RNF139. Interacts with TMEM259. Interacts with TMEM41B. Deubiquitinated by USP25; leading to stabilization.

The protein resides in the endoplasmic reticulum membrane. Its function is as follows. Component of the ERLIN1/ERLIN2 complex which mediates the endoplasmic reticulum-associated degradation (ERAD) of inositol 1,4,5-trisphosphate receptors (IP3Rs) such as ITPR1. Promotes sterol-accelerated ERAD of HMGCR probably implicating an AMFR/gp78-containing ubiquitin ligase complex. Involved in regulation of cellular cholesterol homeostasis by regulation the SREBP signaling pathway. May promote ER retention of the SCAP-SREBF complex. The chain is Erlin-2 from Rattus norvegicus (Rat).